A 623-amino-acid polypeptide reads, in one-letter code: Transketolase (623 aa).

Position 1 is an N-acetylmethionine (Met-1). 2 positions are modified to N6-acetyllysine: Lys-6 and Lys-11. His-37 serves as a coordination point for substrate. Thiamine diphosphate contacts are provided by Ser-40 and His-77. Ser-104 carries the post-translational modification Phosphoserine. 123 to 125 (GSL) serves as a coordination point for thiamine diphosphate. Lys-144 is modified (N6-acetyllysine). Asp-155 contacts Mg(2+). Thiamine diphosphate is bound by residues Gly-156 and Asn-185. 2 residues coordinate Mg(2+): Asn-185 and Leu-187. An N6-acetyllysine mark is found at Lys-204, Lys-232, and Lys-241. Positions 244 and 258 each coordinate thiamine diphosphate. Substrate is bound at residue His-258. At Lys-260 the chain carries N6-acetyllysine. The residue at position 275 (Tyr-275) is a Phosphotyrosine. Thr-287 carries the post-translational modification Phosphothreonine. Ser-295 is subject to Phosphoserine. 2 residues coordinate substrate: Arg-318 and Ser-345. Ser-345 bears the Phosphoserine mark. Lys-352 is covalently cross-linked (Glycyl lysine isopeptide (Lys-Gly) (interchain with G-Cter in SUMO2)). The Proton donor role is filled by Glu-366. Phe-392 lines the thiamine diphosphate pocket. 2 residues coordinate substrate: His-416 and Asp-424. Gln-428 contacts thiamine diphosphate. A substrate-binding site is contributed by Arg-474. Residues Lys-538 and Lys-603 each carry the N6-acetyllysine modification.

Belongs to the transketolase family. As to quaternary structure, homodimer. Mg(2+) serves as cofactor. Ca(2+) is required as a cofactor. It depends on Mn(2+) as a cofactor. Requires Co(2+) as cofactor. The cofactor is thiamine diphosphate.

The catalysed reaction is D-sedoheptulose 7-phosphate + D-glyceraldehyde 3-phosphate = aldehydo-D-ribose 5-phosphate + D-xylulose 5-phosphate. Functionally, catalyzes the transfer of a two-carbon ketol group from a ketose donor to an aldose acceptor, via a covalent intermediate with the cofactor thiamine pyrophosphate. The sequence is that of Transketolase (Tkt) from Rattus norvegicus (Rat).